Consider the following 359-residue polypeptide: CMP-N-acetylneuraminate-poly-alpha-2,8-sialyltransferase (359 aa).

The Cytoplasmic portion of the chain corresponds to 1–7; that stretch reads MRSIRKR. Residues 8–20 form a helical; Signal-anchor for type II membrane protein membrane-spanning segment; the sequence is WTICTISLLLIFY. Topologically, residues 21–359 are lumenal; that stretch reads KTKEIARTEE…KLTTGKCMKQ (339 aa). 3 N-linked (GlcNAc...) asparagine glycosylation sites follow: N50, N74, and N119. 2 cysteine pairs are disulfide-bonded: C142–C292 and C156–C356. The CMP-N-acetyl-beta-neuraminate site is built by N147 and N170. N-linked (GlcNAc...) asparagine glycans are attached at residues N204 and N219. CMP-N-acetyl-beta-neuraminate is bound by residues S279, T280, G281, and W301. H331 (proton donor/acceptor) is an active-site residue.

This sequence belongs to the glycosyltransferase 29 family. Post-translationally, autopolysialylated.

Its subcellular location is the golgi apparatus membrane. The protein localises to the secreted. It carries out the reaction [N-acetyl-alpha-D-neuraminosyl-(2-&gt;8)](n) + CMP-N-acetyl-beta-neuraminate = [N-acetyl-alpha-D-neuraminosyl-(2-&gt;8)](n+1) + CMP + H(+). It functions in the pathway protein modification; protein glycosylation. Its function is as follows. Catalyzes the transfer of a sialic acid from a CMP-linked sialic acid donor onto a terminal alpha-2,3-, alpha-2,6-, or alpha-2,8-linked sialic acid of an N-linked glycan protein acceptor through alpha-2,8-linkages. Therefore, participates in polysialic acid synthesis on various sialylated N-acetyllactosaminyl oligosaccharides, including NCAM1 N-glycans, FETUB N-glycans and AHSG. It is noteworthy that alpha-2,3-linked sialic acid is apparently a better acceptor than alpha-2,6-linked sialic acid. The chain is CMP-N-acetylneuraminate-poly-alpha-2,8-sialyltransferase from Cricetulus griseus (Chinese hamster).